The primary structure comprises 205 residues: Large ribosomal subunit protein bL25 (205 aa).

The disordered stretch occupies residues 178–205; sequence FPETEPVEDEESAGEDAQGESEEKAAKE. Positions 182-197 are enriched in acidic residues; that stretch reads EPVEDEESAGEDAQGE.

The protein belongs to the bacterial ribosomal protein bL25 family. CTC subfamily. In terms of assembly, part of the 50S ribosomal subunit; part of the 5S rRNA/L5/L18/L25 subcomplex. Contacts the 5S rRNA. Binds to the 5S rRNA independently of L5 and L18.

This is one of the proteins that binds to the 5S RNA in the ribosome where it forms part of the central protuberance. The sequence is that of Large ribosomal subunit protein bL25 from Cutibacterium acnes (strain DSM 16379 / KPA171202) (Propionibacterium acnes).